A 331-amino-acid polypeptide reads, in one-letter code: Lipoyl synthase (331 aa).

The interval 1-20 (MTTETNPAVTPAYNPSEKQK) is disordered. Residues cysteine 71, cysteine 76, cysteine 82, cysteine 97, cysteine 101, cysteine 104, and serine 311 each coordinate [4Fe-4S] cluster. The region spanning 82–300 (CFGKGTATFM…EEEAYKMGFA (219 aa)) is the Radical SAM core domain.

Belongs to the radical SAM superfamily. Lipoyl synthase family. [4Fe-4S] cluster serves as cofactor.

The protein localises to the cytoplasm. It carries out the reaction [[Fe-S] cluster scaffold protein carrying a second [4Fe-4S](2+) cluster] + N(6)-octanoyl-L-lysyl-[protein] + 2 oxidized [2Fe-2S]-[ferredoxin] + 2 S-adenosyl-L-methionine + 4 H(+) = [[Fe-S] cluster scaffold protein] + N(6)-[(R)-dihydrolipoyl]-L-lysyl-[protein] + 4 Fe(3+) + 2 hydrogen sulfide + 2 5'-deoxyadenosine + 2 L-methionine + 2 reduced [2Fe-2S]-[ferredoxin]. It functions in the pathway protein modification; protein lipoylation via endogenous pathway; protein N(6)-(lipoyl)lysine from octanoyl-[acyl-carrier-protein]: step 2/2. Its function is as follows. Catalyzes the radical-mediated insertion of two sulfur atoms into the C-6 and C-8 positions of the octanoyl moiety bound to the lipoyl domains of lipoate-dependent enzymes, thereby converting the octanoylated domains into lipoylated derivatives. The protein is Lipoyl synthase of Janthinobacterium sp. (strain Marseille) (Minibacterium massiliensis).